Consider the following 351-residue polypeptide: Cytochrome c biogenesis protein CcsA (351 aa).

8 helical membrane-spanning segments follow: residues 17-37 (VLFL…LPAI), 38-58 (NALG…LLGA), 68-88 (LSNL…VHLI), 97-117 (LVGV…TLTL), 143-163 (MMLS…FLVI), 259-279 (IIGL…VWAN), 286-306 (WSWD…AAYL), and 320-340 (AILA…VNLL).

It belongs to the CcmF/CycK/Ccl1/NrfE/CcsA family. As to quaternary structure, may interact with ccs1.

The protein localises to the cellular thylakoid membrane. Its function is as follows. Required during biogenesis of c-type cytochromes (cytochrome c6 and cytochrome f) at the step of heme attachment. This Trichormus variabilis (strain ATCC 29413 / PCC 7937) (Anabaena variabilis) protein is Cytochrome c biogenesis protein CcsA.